Here is a 293-residue protein sequence, read N- to C-terminus: Ribosomal protein L11 methyltransferase (293 aa).

S-adenosyl-L-methionine is bound by residues Thr-145, Gly-166, Asp-188, and Asn-230.

The protein belongs to the methyltransferase superfamily. PrmA family.

The protein localises to the cytoplasm. It catalyses the reaction L-lysyl-[protein] + 3 S-adenosyl-L-methionine = N(6),N(6),N(6)-trimethyl-L-lysyl-[protein] + 3 S-adenosyl-L-homocysteine + 3 H(+). Methylates ribosomal protein L11. This is Ribosomal protein L11 methyltransferase from Salmonella dublin (strain CT_02021853).